The following is an 88-amino-acid chain: Small ribosomal subunit protein uS19 (88 aa).

The protein belongs to the universal ribosomal protein uS19 family.

Its function is as follows. Protein S19 forms a complex with S13 that binds strongly to the 16S ribosomal RNA. The sequence is that of Small ribosomal subunit protein uS19 from Ureaplasma parvum serovar 3 (strain ATCC 27815 / 27 / NCTC 11736).